The sequence spans 155 residues: UPF0178 protein ACICU_02858 (155 aa).

A disordered region spans residues 120–155 (GAGVQTGGPPPISERDKREFSSALDQTILKQKRKTA).

It belongs to the UPF0178 family.

This is UPF0178 protein ACICU_02858 from Acinetobacter baumannii (strain ACICU).